Reading from the N-terminus, the 342-residue chain is MSLHGKRKEIYKYEAPWTVYAMNWSVRPDKRFRLALGSFVEEYNNKVQLVGLDEESSEFICRNTFDHPYPTTKLMWIPDTKGVYPDLLATSGDYLRVWRVGETETRLECLLNNNKNSDFCAPLTSFDWNEVDPYLLGTSSIDTTCTIWGLETGQVLGRVNLVSGHVKTQLIAHDKEVYDIAFSRAGGGRDMFASVGADGSVRMFDLRHLEHSTIIYEDPQHHPLLRLCWNKQDPNYLATMAMDGMEVVILDVRVPCTPVARLNNHRACVNGIAWAPHSSCHICTAADDHQALIWDIQQMPRAIEDPILAYTAEGEINNVQWASTQPDWIAICYNNCLEILRV.

WD repeat units follow at residues 6-52 (KRKE…LVGL), 60-100 (ICRN…VWRV), 108-150 (ECLL…IWGL), 165-206 (HVKT…MFDL), 213-252 (TIIY…ILDV), 257-296 (TPVA…IWDI), and 303-342 (IEDP…ILRV).

Belongs to the WD repeat DCAF7 family. In terms of assembly, interacts with DYRK1A, DYRK1B and DIAPH1. Interacts with DDB1. Interacts with ZNF703. Interacts with human adenovirus 5 E1A protein.

The protein localises to the cytoplasm. It is found in the nucleus. It functions in the pathway protein modification; protein ubiquitination. Its function is as follows. Involved in craniofacial development. Acts upstream of the EDN1 pathway and is required for formation of the upper jaw equivalent, the palatoquadrate. The activity required for EDN1 pathway function differs between the first and second arches. Associates with DIAPH1 and controls GLI1 transcriptional activity. Could be involved in normal and disease skin development. May function as a substrate receptor for CUL4-DDB1 E3 ubiquitin-protein ligase complex. This Homo sapiens (Human) protein is DDB1- and CUL4-associated factor 7 (DCAF7).